Consider the following 247-residue polypeptide: Orotidine 5'-phosphate decarboxylase (247 aa).

Substrate is bound by residues D22, K44, 71-80 (DLKFHDIPNT), T131, R192, Q201, G221, and R222. The active-site Proton donor is K73.

The protein belongs to the OMP decarboxylase family. Type 1 subfamily. Homodimer.

It catalyses the reaction orotidine 5'-phosphate + H(+) = UMP + CO2. Its pathway is pyrimidine metabolism; UMP biosynthesis via de novo pathway; UMP from orotate: step 2/2. Functionally, catalyzes the decarboxylation of orotidine 5'-monophosphate (OMP) to uridine 5'-monophosphate (UMP). In Pectobacterium carotovorum subsp. carotovorum (strain PC1), this protein is Orotidine 5'-phosphate decarboxylase.